We begin with the raw amino-acid sequence, 179 residues long: Large ribosomal subunit protein uL6 (179 aa).

Belongs to the universal ribosomal protein uL6 family. Part of the 50S ribosomal subunit.

This protein binds to the 23S rRNA, and is important in its secondary structure. It is located near the subunit interface in the base of the L7/L12 stalk, and near the tRNA binding site of the peptidyltransferase center. This is Large ribosomal subunit protein uL6 from Synechococcus sp. (strain WH7803).